The sequence spans 79 residues: CDC42 small effector protein 1-B (79 aa).

S-palmitoyl cysteine attachment occurs at residues Cys10 and Cys11. The CRIB domain occupies 30 to 43 (IGEPMNFVHLTHIG). Residues 41-79 (HIGSGDMGASDGLPKAGTVQEQMRSKCGRDRQWSNSRVL) are disordered. Positions 63 to 72 (MRSKCGRDRQ) are enriched in basic and acidic residues.

It belongs to the CDC42SE/SPEC family.

The protein localises to the cytoplasm. The protein resides in the cytoskeleton. It localises to the cell membrane. Probably involved in the organization of the actin cytoskeleton by acting downstream of CDC42, inducing actin filament assembly. This chain is CDC42 small effector protein 1-B (cdc42se1-b), found in Xenopus laevis (African clawed frog).